The sequence spans 345 residues: G-protein coupled receptor family C group 5 member D (345 aa).

The Extracellular portion of the chain corresponds to 1–27 (MYKDCIESTGDYFLLCDAEGPWGIILE). The helical transmembrane segment at 28-48 (SLAILGIVVTILLLLAFLFLM) threads the bilayer. Over 49 to 63 (RKIQDCSQWNVLPTQ) the chain is Cytoplasmic. A helical transmembrane segment spans residues 64–84 (LLFLLSVLGLFGLAFAFIIEL). The Extracellular segment spans residues 85–93 (NQQTAPVRY). The helical transmembrane segment at 94–114 (FLFGVLFALCFSCLLAHASNL) threads the bilayer. At 115–123 (VKLVRGCVS) the chain is on the cytoplasmic side. Residues 124–144 (FSWTTILCIAIGCSLLQIIIA) form a helical membrane-spanning segment. Topologically, residues 145–167 (TEYVTLIMTRGMMFVNMTPCQLN) are extracellular. The helical transmembrane segment at 168–188 (VDFVVLLVYVLFLMALTFFVS) threads the bilayer. The Cytoplasmic segment spans residues 189 to 204 (KATFCGPCENWKQHGR). Residues 205 to 225 (LIFITVLFSIIIWVVWISMLL) traverse the membrane as a helical segment. Over 226-239 (RGNPQFQRQPQWDD) the chain is Extracellular. A helical membrane pass occupies residues 240–260 (PVVCIALVTNAWVFLLLYIVP). The Cytoplasmic segment spans residues 261-345 (ELCILYRSCR…LSPQQDAGGV (85 aa)).

Belongs to the G-protein coupled receptor 3 family. As to quaternary structure, homodimer. Widely expressed in the peripheral system. Expression pattern is high in pancreas, medium in kidney, small intestine, spleen and testis, low in lung, colon, leukocyte, prostate and thymus and not detectable in brain, heart, liver, placenta, skeletal muscle and ovary.

The protein resides in the cell membrane. G-protein coupled receptor involved in hard keratin expression and likely plays a role in the development of hair and nails. The chain is G-protein coupled receptor family C group 5 member D (GPRC5D) from Homo sapiens (Human).